Consider the following 288-residue polypeptide: Bifunctional protein FolD (288 aa).

NADP(+)-binding positions include 164 to 166 (GTS) and Ile230.

The protein belongs to the tetrahydrofolate dehydrogenase/cyclohydrolase family. As to quaternary structure, homodimer.

It catalyses the reaction (6R)-5,10-methylene-5,6,7,8-tetrahydrofolate + NADP(+) = (6R)-5,10-methenyltetrahydrofolate + NADPH. The enzyme catalyses (6R)-5,10-methenyltetrahydrofolate + H2O = (6R)-10-formyltetrahydrofolate + H(+). Its pathway is one-carbon metabolism; tetrahydrofolate interconversion. Its function is as follows. Catalyzes the oxidation of 5,10-methylenetetrahydrofolate to 5,10-methenyltetrahydrofolate and then the hydrolysis of 5,10-methenyltetrahydrofolate to 10-formyltetrahydrofolate. This is Bifunctional protein FolD from Mycoplasma mycoides subsp. mycoides SC (strain CCUG 32753 / NCTC 10114 / PG1).